The primary structure comprises 1463 residues: Collagen alpha-1(I) chain (1463 aa).

A signal peptide spans 1–22 (MFSFVDLRLLLLLAATALLTHG). Positions 23 to 161 (QEEGQEEGQE…PPGLGGNFAP (139 aa)) are cleaved as a propeptide — N-terminal propeptide. The region spanning 38-96 (VTCVQNGLRYHDRDVWKPVPCQICVCDNGNVLCDDVICDELKDCPNAKVPTDECCPVCP) is the VWFC domain. Positions 98–1217 (GQESPTDQET…AHDGGRYYRA (1120 aa)) are disordered. The span at 138-153 (PGLPGPPGPPGPPGPP) shows a compositional bias: pro residues. Residue Gln162 is modified to Pyrrolidone carboxylic acid. Positions 162-177 (QLSYGYDEKSTGISVP) are nonhelical region (N-terminal). Position 170 is an allysine (Lys170). Ser171 is modified (phosphoserine). Residues 178-1191 (GPMGPSGPRG…PGPPGPPGPP (1014 aa)) form a triple-helical region region. 11 positions are modified to 4-hydroxyproline: Pro189, Pro192, Pro195, Pro204, Pro207, Pro210, Pro225, Pro240, Pro246, Pro255, and Pro261. Positions 197 to 216 (PQGFQGPPGEPGEPGASGPM) are enriched in low complexity. Basic and acidic residues predominate over residues 228–242 (NGDDGEAGKPGRPGE). Lys264 carries the post-translational modification 5-hydroxylysine; alternate. O-linked (Gal...) hydroxylysine; alternate glycosylation is present at Lys264. Residue Ser270 is modified to Phosphoserine. Lys276 and Lys285 each carry 5-hydroxylysine. Residues 278–294 (DAGPAGPKGEPGSPGEN) show a composition bias toward low complexity. A 4-hydroxyproline mark is found at Pro288, Pro291, Pro297, Pro306, and Pro312. Residues 317 to 330 (PAGARGNDGATGAA) are compositionally biased toward low complexity. The segment covering 332–344 (PPGPTGPAGPPGF) has biased composition (pro residues). 4-hydroxyproline occurs at positions 333, 342, and 345. The segment covering 349 to 358 (GAKGEGGPQG) has biased composition (gly residues). A 4-hydroxyproline mark is found at Pro372, Pro375, Pro387, Pro393, Pro402, Pro408, Pro411, and Pro426. Positions 378 to 417 (AGAAGPAGNPGADGQPGAKGANGAPGIAGAPGFPGARGPS) are enriched in low complexity. Lys429 is modified (5-hydroxylysine). A 4-hydroxyproline mark is found at Pro435, Pro438, Pro450, Pro459, Pro474, Pro480, Pro489, and Pro495. Over residues 484–493 (GERGGPGSRG) the composition is skewed to gly residues. Residues 494–525 (FPGADGVAGPKGPAGERGAPGPAGPKGSPGEA) are compositionally biased toward low complexity. 5-hydroxylysine is present on Lys504. 4-hydroxyproline is present on residues Pro513, Pro522, Pro528, Pro534, Pro543, Pro546, Pro555, Pro564, Pro570, Pro582, Pro591, Pro600, Pro603, Pro621, Pro639, Pro645, Pro651, Pro657, Pro663, Pro669, Pro681, Pro690, Pro702, Pro714, Pro717, Pro723, Pro729, and Pro738. Residues 537 to 563 (KGLTGSPGSPGPDGKTGPPGPAGQDGR) show a composition bias toward low complexity. The span at 572-591 (ARGQAGVMGFPGPKGAAGEP) shows a compositional bias: low complexity. Residues 633 to 660 (QGPAGSPGFQGLPGPAGPPGEAGKPGEQ) show a composition bias toward low complexity. A compositionally biased stretch (low complexity) spans 695 to 723 (PRGANGAPGNDGAKGDAGAPGAPGSQGAP). The Cell attachment site motif lies at 744–746 (RGD). Lys750 carries the post-translational modification 5-hydroxylysine. Residues Pro756, Pro771, and Pro777 each carry the 4-hydroxyproline modification. The segment covering 783 to 797 (AGPSGPAGPTGARGA) has biased composition (low complexity). Position 786 is a phosphoserine (Ser786). Pro798, Pro804, Pro807, Pro816, Pro822, Pro840, Pro849, and Pro858 each carry 4-hydroxyproline. Low complexity predominate over residues 810 to 837 (AGFAGPPGADGQPGAKGEPGDAGAKGDA). Residues 839–851 (PPGPAGPAGPPGP) are compositionally biased toward pro residues. Low complexity predominate over residues 852–882 (IGNVGAPGPKGARGSAGPPGATGFPGAAGRV). Lys861 is subject to 5-hydroxylysine. Pro870 and Pro876 each carry 4-hydroxyproline. Pro884 is subject to 3-hydroxyproline. Residues Pro885, Pro894, Pro897, Pro918, Pro927, Pro936, Pro945, Pro963, Pro972, Pro975, Pro981, Pro996, Pro1002, Pro1008, Pro1017, and Pro1023 each carry the 4-hydroxyproline modification. Residues 930-954 (AGEKGAPGADGPAGAPGTPGPQGIA) are compositionally biased toward low complexity. Positions 995 to 1005 (PPGPMGPPGLA) are enriched in pro residues. Lys1032 is subject to 5-hydroxylysine. The segment covering 1041-1056 (AGPPGAPGAPGAPGPV) has biased composition (pro residues). 4-hydroxyproline is present on residues Pro1044, Pro1047, and Pro1050. A compositionally biased stretch (low complexity) spans 1077–1091 (IGPVGARGPAGPQGP). A Cell attachment site motif is present at residues 1092-1094 (RGD). A compositionally biased stretch (basic and acidic residues) spans 1092–1106 (RGDKGETGEQGDRGI). 5-hydroxylysine is present on Lys1095. At Lys1107 the chain carries 5-hydroxylysine; alternate. Residue Lys1107 is glycosylated (O-linked (Gal...) hydroxylysine; alternate). 4-hydroxyproline occurs at positions 1119, 1122, 1125, 1143, and 1158. The span at 1125 to 1149 (PGEQGPSGASGPAGPRGPPGSAGSP) shows a compositional bias: low complexity. Residue Pro1163 is modified to 3-hydroxyproline. Pro1164 is subject to 4-hydroxyproline. Over residues 1176–1191 (AGPPGPPGPPGPPGPP) the composition is skewed to pro residues. Pro1178 carries the 3-hydroxyproline modification. A 4-hydroxyproline modification is found at Pro1179. 3-hydroxyproline is present on Pro1181. At Pro1182 the chain carries 4-hydroxyproline. Pro1184 is subject to 3-hydroxyproline. 4-hydroxyproline is present on residues Pro1185, Pro1188, and Pro1191. Residues 1192–1215 (SGGYDLSFLPQPPQEKAHDGGRYY) form a nonhelical region (C-terminal) region. The segment covering 1206 to 1217 (EKAHDGGRYYRA) has biased composition (basic and acidic residues). At Lys1207 the chain carries Allysine. Residues 1218–1463 (DDANVVRDRD…GFDVGPACFL (246 aa)) constitute a propeptide, C-terminal propeptide. Residues 1228–1463 (LEVDTTLKSL…GFDVGPACFL (236 aa)) enclose the Fibrillar collagen NC1 domain. Disulfide bonds link Cys1258–Cys1290, Cys1298–Cys1461, and Cys1369–Cys1414. Residues Asp1276, Asn1278, Gln1279, Cys1281, and Asp1284 each coordinate Ca(2+).

It belongs to the fibrillar collagen family. Trimers of one alpha 2(I) and two alpha 1(I) chains. Interacts with MRC2. Interacts with TRAM2. Interacts with MFAP4 in a Ca (2+)-dependent manner. Post-translationally, contains mostly 4-hydroxyproline. Proline residues at the third position of the tripeptide repeating unit (G-X-Y) are hydroxylated in some or all of the chains. In terms of processing, contains 3-hydroxyproline at a few sites. This modification occurs on the first proline residue in the sequence motif Gly-Pro-Hyp, where Hyp is 4-hydroxyproline. Lysine residues at the third position of the tripeptide repeating unit (G-X-Y) are 5-hydroxylated in some or all of the chains. Post-translationally, O-glycosylated on hydroxylated lysine residues. The O-linked glycan consists of a Glc-Gal disaccharide. As to expression, forms the fibrils of tendon, ligaments and bones. In bones the fibrils are mineralized with calcium hydroxyapatite.

It is found in the secreted. Its subcellular location is the extracellular space. It localises to the extracellular matrix. Type I collagen is a member of group I collagen (fibrillar forming collagen). The chain is Collagen alpha-1(I) chain (COL1A1) from Bos taurus (Bovine).